The sequence spans 570 residues: PTS system lactose-specific EIICB component (570 aa).

A PTS EIIC type-3 domain is found at Ile9–Phe410. 9 helical membrane passes run Gly31 to Val51, Ala65 to Thr85, Ile104 to Pro124, Ala133 to Val153, Phe178 to Ile198, Gly223 to His243, Met283 to Trp303, Val340 to Val360, and Ile382 to Val402. Residues Gln467–Asn570 form the PTS EIIB type-3 domain. The active-site Phosphocysteine intermediate; for EIIB activity is the Cys474. Cys474 carries the phosphocysteine; by EIIA modification.

It is found in the cell membrane. The catalysed reaction is lactose(out) + N(pros)-phospho-L-histidyl-[protein] = lactose 6-phosphate(in) + L-histidyl-[protein]. In terms of biological role, the phosphoenolpyruvate-dependent sugar phosphotransferase system (sugar PTS), a major carbohydrate active transport system, catalyzes the phosphorylation of incoming sugar substrates concomitantly with their translocation across the cell membrane. The enzyme II LacEF PTS system is involved in lactose transport. The sequence is that of PTS system lactose-specific EIICB component from Staphylococcus aureus (strain MSSA476).